The following is a 264-amino-acid chain: MEMO1 family protein Mbur_2394 (264 aa).

Belongs to the MEMO1 family.

This chain is MEMO1 family protein Mbur_2394, found in Methanococcoides burtonii (strain DSM 6242 / NBRC 107633 / OCM 468 / ACE-M).